Consider the following 428-residue polypeptide: Enolase (428 aa).

Q163 contacts (2R)-2-phosphoglycerate. The active-site Proton donor is E205. The Mg(2+) site is built by D242, E286, and D313. Residues K338, R367, S368, and K389 each coordinate (2R)-2-phosphoglycerate. The active-site Proton acceptor is K338.

This sequence belongs to the enolase family. Mg(2+) serves as cofactor.

The protein resides in the cytoplasm. It localises to the secreted. The protein localises to the cell surface. The enzyme catalyses (2R)-2-phosphoglycerate = phosphoenolpyruvate + H2O. The protein operates within carbohydrate degradation; glycolysis; pyruvate from D-glyceraldehyde 3-phosphate: step 4/5. Its function is as follows. Catalyzes the reversible conversion of 2-phosphoglycerate (2-PG) into phosphoenolpyruvate (PEP). It is essential for the degradation of carbohydrates via glycolysis. The polypeptide is Enolase (Bordetella avium (strain 197N)).